A 49-amino-acid polypeptide reads, in one-letter code: Large ribosomal subunit protein bL33C (49 aa).

It belongs to the bacterial ribosomal protein bL33 family.

The sequence is that of Large ribosomal subunit protein bL33C from Bacillus pumilus (strain SAFR-032).